Reading from the N-terminus, the 404-residue chain is High affinity immunoglobulin gamma Fc receptor I (404 aa).

An N-terminal signal peptide occupies residues 1–24 (MILTSFGDDMWLLTTLLLWVPVGG). At 25 to 297 (EVVNATKAVI…QVLGPQSSAP (273 aa)) the chain is on the extracellular side. N-linked (GlcNAc...) asparagine glycosylation is found at Asn-28, Asn-48, Asn-69, Asn-168, and Asn-249. 3 Ig-like C2-type domains span residues 32-111 (AVIT…LQIH), 117-194 (LQAS…SITV), and 201-286 (PVLR…PELE). Intrachain disulfides connect Cys-53–Cys-95, Cys-134–Cys-177, and Cys-221–Cys-269. The helical transmembrane segment at 298-320 (VWFHILFYLSVGIMFSLNTVLYV) threads the bilayer. The tract at residues 321–342 (KIHRLQREKKYNLEVPLVSEQG) is interaction with EPB41L2. Topologically, residues 321–404 (KIHRLQREKK…DSTGAQTSQS (84 aa)) are cytoplasmic. Positions 346–404 (NSFQQVRSDGVYEEVTATASQTTPKEAPDGPRSSVGDCGPEQPEPLPPSDSTGAQTSQS) are disordered. A Phosphoserine modification is found at Ser-347. Thr-368 is subject to Phosphothreonine. Positions 394–404 (SDSTGAQTSQS) are enriched in polar residues.

The protein belongs to the immunoglobulin superfamily. FCGR1 family. In terms of assembly, interacts with FCERG1; forms a functional signaling complex. Interacts with FLNA; prevents FCGR1A degradation. Interacts with EPB41L2, LAT and PPL. Interacts with HCK and LYN. In terms of processing, N-glycosylated. Post-translationally, phosphorylated on serine residues. Macrophage-specific.

It is found in the cell membrane. In terms of biological role, high affinity receptor for the Fc region of immunoglobulins gamma. Functions in both innate and adaptive immune responses. This chain is High affinity immunoglobulin gamma Fc receptor I (Fcgr1), found in Mus musculus (Mouse).